Reading from the N-terminus, the 51-residue chain is Insulin (51 aa).

Cystine bridges form between C7/C37, C19/C50, and C36/C41.

Belongs to the insulin family. In terms of assembly, heterodimer of a B chain and an A chain linked by two disulfide bonds.

Its subcellular location is the secreted. In terms of biological role, insulin decreases blood glucose concentration. It increases cell permeability to monosaccharides, amino acids and fatty acids. It accelerates glycolysis, the pentose phosphate cycle, and glycogen synthesis in liver. The protein is Insulin (INS) of Alligator mississippiensis (American alligator).